A 262-amino-acid polypeptide reads, in one-letter code: Hydroxyethylthiazole kinase (262 aa).

Met-50 lines the substrate pocket. Arg-125 and Thr-171 together coordinate ATP. Substrate is bound at residue Gly-198.

Belongs to the Thz kinase family. Requires Mg(2+) as cofactor.

It carries out the reaction 5-(2-hydroxyethyl)-4-methylthiazole + ATP = 4-methyl-5-(2-phosphooxyethyl)-thiazole + ADP + H(+). The protein operates within cofactor biosynthesis; thiamine diphosphate biosynthesis; 4-methyl-5-(2-phosphoethyl)-thiazole from 5-(2-hydroxyethyl)-4-methylthiazole: step 1/1. In terms of biological role, catalyzes the phosphorylation of the hydroxyl group of 4-methyl-5-beta-hydroxyethylthiazole (THZ). The sequence is that of Hydroxyethylthiazole kinase from Escherichia coli O7:K1 (strain IAI39 / ExPEC).